A 198-amino-acid polypeptide reads, in one-letter code: Recombination protein RecR (198 aa).

A C4-type zinc finger spans residues 58 to 73 (CSVCGNFTDKDPCAIC). The Toprim domain occupies 81-175 (NTICVVEHPK…KVTRIAHGIP (95 aa)).

It belongs to the RecR family.

Its function is as follows. May play a role in DNA repair. It seems to be involved in an RecBC-independent recombinational process of DNA repair. It may act with RecF and RecO. This is Recombination protein RecR from Clostridium tetani (strain Massachusetts / E88).